A 494-amino-acid chain; its full sequence is Maintenance of mitochondrial morphology protein 1 (494 aa).

The Lumenal segment spans residues 1–25 (MGDDQSLRSTVAENDISANLSFTQG). Residues 26–46 (FLLGQLSVVLLIGAFIKFFIF) form a helical membrane-spanning segment. The Cytoplasmic portion of the chain corresponds to 47–494 (GEAPPPPSRG…GTLPGGAAAN (448 aa)). 3 disordered regions span residues 53–99 (PSRG…VPSS), 278–330 (PPLH…KSNV), and 395–494 (RTGV…AAAN). Positions 57–67 (LSHRASTHRRS) are enriched in basic residues. Composition is skewed to polar residues over residues 68-81 (NSIY…GTSR) and 88-99 (STSNVLRPVPSS). The region spanning 134–387 (QPESLDWFNV…EPRVQVVGLP (254 aa)) is the SMP-LTD domain. Positions 278-290 (PPLHTPSPSPSPP) are enriched in pro residues. 2 stretches are compositionally biased toward polar residues: residues 300 to 318 (THPT…NAQE) and 406 to 415 (TGSNAASRSA). The segment covering 425–437 (RADDIGREPDGLR) has biased composition (basic and acidic residues).

The protein belongs to the MMM1 family. As to quaternary structure, homodimer. Component of the ER-mitochondria encounter structure (ERMES) or MDM complex, composed of mmm1, mdm10, mdm12 and mdm34. A mmm1 homodimer associates with one molecule of mdm12 on each side in a pairwise head-to-tail manner, and the SMP-LTD domains of mmm1 and mdm12 generate a continuous hydrophobic tunnel for phospholipid trafficking.

Its subcellular location is the endoplasmic reticulum membrane. Functionally, component of the ERMES/MDM complex, which serves as a molecular tether to connect the endoplasmic reticulum (ER) and mitochondria. Components of this complex are involved in the control of mitochondrial shape and protein biogenesis, and function in nonvesicular lipid trafficking between the ER and mitochondria. The mdm12-mmm1 subcomplex functions in the major beta-barrel assembly pathway that is responsible for biogenesis of all outer membrane beta-barrel proteins, and acts in a late step after the SAM complex. The mdm10-mdm12-mmm1 subcomplex further acts in the TOM40-specific pathway after the action of the mdm12-mmm1 complex. Essential for establishing and maintaining the structure of mitochondria and maintenance of mtDNA nucleoids. This is Maintenance of mitochondrial morphology protein 1 from Aspergillus oryzae (strain ATCC 42149 / RIB 40) (Yellow koji mold).